A 458-amino-acid chain; its full sequence is Exodeoxyribonuclease 7 large subunit (458 aa).

The protein belongs to the XseA family. Heterooligomer composed of large and small subunits.

It localises to the cytoplasm. It catalyses the reaction Exonucleolytic cleavage in either 5'- to 3'- or 3'- to 5'-direction to yield nucleoside 5'-phosphates.. In terms of biological role, bidirectionally degrades single-stranded DNA into large acid-insoluble oligonucleotides, which are then degraded further into small acid-soluble oligonucleotides. This is Exodeoxyribonuclease 7 large subunit from Yersinia enterocolitica serotype O:8 / biotype 1B (strain NCTC 13174 / 8081).